We begin with the raw amino-acid sequence, 324 residues long: Acetyl-coenzyme A carboxylase carboxyl transferase subunit alpha (324 aa).

One can recognise a CoA carboxyltransferase C-terminal domain in the interval 37–291 (KLEKRLDKLK…REFIIQEWLR (255 aa)).

The protein belongs to the AccA family. In terms of assembly, acetyl-CoA carboxylase is a heterohexamer composed of biotin carboxyl carrier protein (AccB), biotin carboxylase (AccC) and two subunits each of ACCase subunit alpha (AccA) and ACCase subunit beta (AccD).

Its subcellular location is the cytoplasm. It carries out the reaction N(6)-carboxybiotinyl-L-lysyl-[protein] + acetyl-CoA = N(6)-biotinyl-L-lysyl-[protein] + malonyl-CoA. The protein operates within lipid metabolism; malonyl-CoA biosynthesis; malonyl-CoA from acetyl-CoA: step 1/1. Component of the acetyl coenzyme A carboxylase (ACC) complex. First, biotin carboxylase catalyzes the carboxylation of biotin on its carrier protein (BCCP) and then the CO(2) group is transferred by the carboxyltransferase to acetyl-CoA to form malonyl-CoA. This Chlamydia pneumoniae (Chlamydophila pneumoniae) protein is Acetyl-coenzyme A carboxylase carboxyl transferase subunit alpha.